The following is a 184-amino-acid chain: Peptide deformylase (184 aa).

Residues cysteine 98 and histidine 140 each coordinate Fe cation. Glutamate 141 is an active-site residue. Histidine 144 is a Fe cation binding site.

This sequence belongs to the polypeptide deformylase family. Fe(2+) is required as a cofactor.

The catalysed reaction is N-terminal N-formyl-L-methionyl-[peptide] + H2O = N-terminal L-methionyl-[peptide] + formate. Its function is as follows. Removes the formyl group from the N-terminal Met of newly synthesized proteins. Requires at least a dipeptide for an efficient rate of reaction. N-terminal L-methionine is a prerequisite for activity but the enzyme has broad specificity at other positions. This is Peptide deformylase from Bacteroides thetaiotaomicron (strain ATCC 29148 / DSM 2079 / JCM 5827 / CCUG 10774 / NCTC 10582 / VPI-5482 / E50).